Reading from the N-terminus, the 178-residue chain is Large ribosomal subunit protein uL6 (178 aa).

The protein belongs to the universal ribosomal protein uL6 family. Part of the 50S ribosomal subunit.

Its function is as follows. This protein binds to the 23S rRNA, and is important in its secondary structure. It is located near the subunit interface in the base of the L7/L12 stalk, and near the tRNA binding site of the peptidyltransferase center. The protein is Large ribosomal subunit protein uL6 of Oenococcus oeni (strain ATCC BAA-331 / PSU-1).